The following is a 248-amino-acid chain: PF03932 family protein CutC (248 aa).

This sequence belongs to the CutC family.

The protein resides in the cytoplasm. This Citrobacter koseri (strain ATCC BAA-895 / CDC 4225-83 / SGSC4696) protein is PF03932 family protein CutC.